Consider the following 708-residue polypeptide: MLKLFSAFRKNKIWDFNGGIHPPEMKTQSNGTPLRQVPLAQRFVIPLKQHIGAEGELCVSVGDKVLRGQPLTRGRGKMLPVHAPTSGTVTAIAPHSTAHPSALAELSVIIDADGEDCWIPRDGWADYRTRSREELIERIHQFGVAGLGGAGFPTGVKLQGGGDKIETLIINAAECEPYITADDRLMQDCAAQLVEGIRILAHILQPREILIGIEDNKPQAISMLRAVLADSNDISLRVIPTKYPSGGAKQLTYILTGKQVPHGGRSSDIGVLMQNVGTAYAVKRAVIDGEPITERVVTLTGEAIARPGNVWARLGTPVRHLLNDARFCPSADQMVIMGGPLMGFTLPWLDVPVVKITNCLLAPSANELGEPQEEQSCIRCSACADACPADLLPQQLYWFSKGQQHDKATTHNIADCIECGACAWVCPSNIPLVQYFRQEKAEIAAIRQEEKRAAEAKARFEARQARLEREKAARLERHKSAAVQPAAKDKDAIAAALARVKEKQAQATQPIVIKAGERPDNSAIIAAREARKAQARAKQAELQQTNDAATVADPRKTAVEAAIARAKARKLEQQQANAEPEEQVDPRKAAIEAAIARAKARKLEQQQANAEPEEQVDPRKAAVEAAIARAKARKLEQQQANAVPEEQVDPRKAAVEAAIARAKARKLEQQQTNAEPEEQVDPRKAAVAAAIARAQAKKAAQQKVVNED.

2 4Fe-4S ferredoxin-type domains span residues 369–397 and 407–436; these read GEPQ…QQLY and KATT…VQYF. [4Fe-4S] cluster-binding residues include Cys377, Cys380, Cys383, Cys387, Cys416, Cys419, Cys422, and Cys426. Residues 663–684 form a disordered region; the sequence is KARKLEQQQTNAEPEEQVDPRK.

This sequence belongs to the 4Fe4S bacterial-type ferredoxin family. RnfC subfamily. In terms of assembly, the complex is composed of six subunits: RsxA, RsxB, RsxC, RsxD, RsxE and RsxG. The cofactor is [4Fe-4S] cluster.

The protein resides in the cell inner membrane. In terms of biological role, part of a membrane-bound complex that couples electron transfer with translocation of ions across the membrane. Required to maintain the reduced state of SoxR. This is Ion-translocating oxidoreductase complex subunit C from Shigella boydii serotype 18 (strain CDC 3083-94 / BS512).